The chain runs to 1259 residues: Bud site selection protein 4 homolog (1259 aa).

Disordered stretches follow at residues 185-416 (YDRG…MVKP), 428-455 (LHLG…DAMK), and 862-902 (SGLG…KKRT). The span at 247–267 (ATDKRSLTDKTVPDNRGENER) shows a compositional bias: basic and acidic residues. Positions 277–289 (RNPSIETGTTDEY) are enriched in polar residues. Basic and acidic residues-rich tracts occupy residues 305–324 (DDSK…KPQR) and 368–391 (IRDR…DHEL). The span at 397 to 411 (SARTNSSASGNSSDS) shows a compositional bias: low complexity. The 112-residue stretch at 1128-1239 (AIAMEGFMWQ…WIEKLRKVIE (112 aa)) folds into the PH domain.

Belongs to the BUD4 family.

The protein localises to the cell septum. May be involved in the septin organization at the site of septation. The protein is Bud site selection protein 4 homolog (BUD4) of Eremothecium gossypii (strain ATCC 10895 / CBS 109.51 / FGSC 9923 / NRRL Y-1056) (Yeast).